The primary structure comprises 367 residues: Glutamate 5-kinase (367 aa).

Lys-8 is an ATP binding site. Ser-49, Asp-136, and Asn-148 together coordinate substrate. Residues 168-169 (TD) and 210-216 (TGGMVTK) each bind ATP. Positions 275-353 (AGKLYLDEGA…REISTILGYA (79 aa)) constitute a PUA domain.

Belongs to the glutamate 5-kinase family.

The protein resides in the cytoplasm. It catalyses the reaction L-glutamate + ATP = L-glutamyl 5-phosphate + ADP. The protein operates within amino-acid biosynthesis; L-proline biosynthesis; L-glutamate 5-semialdehyde from L-glutamate: step 1/2. Functionally, catalyzes the transfer of a phosphate group to glutamate to form L-glutamate 5-phosphate. The chain is Glutamate 5-kinase from Nostoc punctiforme (strain ATCC 29133 / PCC 73102).